Here is a 223-residue protein sequence, read N- to C-terminus: MIPQTLEQLLSQAQSIAGLTFGELADELHIPVPPDLKRDKGWVGMLLERALGATAGSKAEQDFSHLGVELKTLPINAEGYPLETTFVSLAPLVQNSGVKWENSHVRHKLSCVLWMPIEGSRHIPLRERHIGAPIFWKPTAEQERQLKQDWEELMDLIVLGKLDQITARIGEVMQLRPKGANSKAITKGIGKNGEVIDTLPLGFYLRKEFTAQILNAFLETKPL.

This sequence belongs to the MutH family.

Its subcellular location is the cytoplasm. Its function is as follows. Sequence-specific endonuclease that cleaves unmethylated GATC sequences. It is involved in DNA mismatch repair. This Haemophilus influenzae (strain PittEE) protein is DNA mismatch repair protein MutH.